The chain runs to 167 residues: CASP-like protein UU1 (167 aa).

The Cytoplasmic portion of the chain corresponds to 1–17 (MVELESQEAVTVASTAD). A helical transmembrane segment spans residues 18–38 (IAVDVSLRLLAAATSLASAVV). The Extracellular segment spans residues 39-54 (VAANHQQRWGVRVDFT). A helical membrane pass occupies residues 55–75 (LFQVWIGFVAVNLVCTVYAAA). The Cytoplasmic portion of the chain corresponds to 76–94 (TAAAARKAMGRWWLHHADA). The chain crosses the membrane as a helical span at residues 95-115 (VVVNLEAAATAGAGAIGSIAM). Residues 116-135 (WGNEASGWYAVCRLYRRYCN) are Extracellular-facing. The chain crosses the membrane as a helical span at residues 136–156 (AGAAALALSLAAVLLLGVACA). The Cytoplasmic segment spans residues 157 to 167 (RSRYPKMPPTT).

This sequence belongs to the Casparian strip membrane proteins (CASP) family. Homodimer and heterodimers.

It is found in the cell membrane. In Oryza sativa subsp. indica (Rice), this protein is CASP-like protein UU1.